A 336-amino-acid polypeptide reads, in one-letter code: Protein RecA (336 aa).

66–73 (GNESSGKT) is an ATP binding site.

It belongs to the RecA family.

It is found in the cytoplasm. In terms of biological role, can catalyze the hydrolysis of ATP in the presence of single-stranded DNA, the ATP-dependent uptake of single-stranded DNA by duplex DNA, and the ATP-dependent hybridization of homologous single-stranded DNAs. It interacts with LexA causing its activation and leading to its autocatalytic cleavage. This is Protein RecA from Mycoplasma pneumoniae (strain ATCC 29342 / M129 / Subtype 1) (Mycoplasmoides pneumoniae).